Consider the following 605-residue polypeptide: Heparan-sulfate 6-O-sulfotransferase 2 (605 aa).

The Cytoplasmic portion of the chain corresponds to 1–4; it reads MALP. The segment at 1–66 is disordered; it reads MALPACAVRE…GVSHGFHTRP (66 aa). Residues 5–27 traverse the membrane as a helical; Signal-anchor for type II membrane protein segment; the sequence is ACAVREFEPPRQPERGAPVRTTC. The span at 9–18 shows a compositional bias: basic and acidic residues; the sequence is REFEPPRQPE. Residues 28-605 are Lumenal-facing; that stretch reads PRRHSRVEAE…DYIGSVEKWR (578 aa). N-linked (GlcNAc...) asparagine glycosylation is present at Asn209. Position 233 to 241 (233 to 241) interacts with 3'-phosphoadenylyl sulfate; sequence HIQKTGGTT. Residues 263–264, Arg280, Trp285, and His290 each bind substrate; that span reads KK. The Proton acceptor role is filled by His290. 3'-phosphoadenylyl sulfate-binding residues include Arg325 and Ser333. Substrate contacts are provided by His337 and Trp344. An N-linked (GlcNAc...) asparagine glycan is attached at Asn404. 457-459 contributes to the 3'-phosphoadenylyl sulfate binding site; that stretch reads TQY. Residue Asn460 is glycosylated (N-linked (GlcNAc...) asparagine). 463 to 464 serves as a coordination point for 3'-phosphoadenylyl sulfate; that stretch reads RA. The interval 530–605 is disordered; it reads FQSQGQGQSQ…DYIGSVEKWR (76 aa). Positions 531 to 571 are enriched in low complexity; the sequence is QSQGQGQSQNPNQNQSQNPNPNANQNLTQNLMQNLTQSLSQ. Residues Asn544, Asn556, Asn564, Asn589, and Asn592 are each glycosylated (N-linked (GlcNAc...) asparagine). Residues 579 to 597 are compositionally biased toward polar residues; it reads KQNSGKEQNDNTSNGTNDY.

It belongs to the sulfotransferase 6 family.

The protein resides in the membrane. The enzyme catalyses alpha-D-glucosaminyl-[heparan sulfate](n) + 3'-phosphoadenylyl sulfate = 6-sulfo-alpha-D-glucosaminyl-[heparan sulfate](n) + adenosine 3',5'-bisphosphate + H(+). Its function is as follows. 6-O-sulfation enzyme which catalyzes the transfer of sulfate from 3'-phosphoadenosine 5'-phosphosulfate (PAPS) to position 6 of the N-sulfoglucosamine residue (GlcNS) of heparan sulfate. This is Heparan-sulfate 6-O-sulfotransferase 2 from Homo sapiens (Human).